A 406-amino-acid polypeptide reads, in one-letter code: 2,3-bisphosphoglycerate-independent phosphoglycerate mutase (406 aa).

It belongs to the BPG-independent phosphoglycerate mutase family. A-PGAM subfamily.

The enzyme catalyses (2R)-2-phosphoglycerate = (2R)-3-phosphoglycerate. It participates in carbohydrate degradation; glycolysis; pyruvate from D-glyceraldehyde 3-phosphate: step 3/5. Catalyzes the interconversion of 2-phosphoglycerate and 3-phosphoglycerate. The protein is 2,3-bisphosphoglycerate-independent phosphoglycerate mutase of Methanococcus maripaludis (strain DSM 14266 / JCM 13030 / NBRC 101832 / S2 / LL).